Reading from the N-terminus, the 305-residue chain is tRNA dimethylallyltransferase (305 aa).

8-15 (GPTAVGKT) lines the ATP pocket. 10–15 (TAVGKT) is a substrate binding site. An interaction with substrate tRNA region spans residues 33–36 (DSRQ).

Belongs to the IPP transferase family. As to quaternary structure, monomer. Requires Mg(2+) as cofactor.

It catalyses the reaction adenosine(37) in tRNA + dimethylallyl diphosphate = N(6)-dimethylallyladenosine(37) in tRNA + diphosphate. In terms of biological role, catalyzes the transfer of a dimethylallyl group onto the adenine at position 37 in tRNAs that read codons beginning with uridine, leading to the formation of N6-(dimethylallyl)adenosine (i(6)A). In Thermotoga sp. (strain RQ2), this protein is tRNA dimethylallyltransferase.